The following is a 135-amino-acid chain: Protein Wnt-7b (135 aa).

Intrachain disulfides connect cysteine 3–cysteine 17 and cysteine 5–cysteine 12. Serine 9 is lipidated: O-palmitoleoyl serine; by PORCN. The disordered linker stretch occupies residues 41–69 (VEVVRANRLRQPTFLKIKKVRSYQKPMET). Cystine bridges form between cysteine 81/cysteine 112, cysteine 97/cysteine 107, and cysteine 134/cysteine 135. Asparagine 98 carries N-linked (GlcNAc...) asparagine glycosylation.

The protein belongs to the Wnt family. Post-translationally, palmitoleoylation is required for efficient binding to frizzled receptors. Depalmitoleoylation leads to Wnt signaling pathway inhibition. As to expression, in adults, in brain and lung.

Its subcellular location is the secreted. It localises to the extracellular space. It is found in the extracellular matrix. Ligand for members of the frizzled family of seven transmembrane receptors that functions in the canonical Wnt/beta-catenin signaling pathway. Required for normal fusion of the chorion and the allantois during placenta development. Required for central nervous system (CNS) angiogenesis and blood-brain barrier regulation. This is Protein Wnt-7b (wnt7b) from Xenopus laevis (African clawed frog).